Reading from the N-terminus, the 81-residue chain is uncharacterized protein (81 aa).

An N-terminal signal peptide occupies residues 1 to 24 (MRKILKIVSLLILLLLLVYSFFSP). At 25-28 (NSQL) the chain is on the extracellular side. A helical transmembrane segment spans residues 29–49 (FVFVQLIIIAFLIGFGINCFV). Topologically, residues 50-81 (KKERYQGTLYFVIAICNITINLDKINELIQSI) are cytoplasmic.

The protein localises to the cell membrane. This is an uncharacterized protein from Bacillus subtilis (strain 168).